Here is a 703-residue protein sequence, read N- to C-terminus: Cyclomaltodextrin glucanotransferase (703 aa).

A signal peptide spans 1 to 29; the sequence is MNDLNDFLKTILLSFIFFLLLSLPTVAEA. Residues 30–160 form an A1 region; that stretch reads DVTNKVNYSK…GIKVIMDFTP (131 aa). Positions 52, 54, 57, and 58 each coordinate Ca(2+). The cysteines at positions 68 and 75 are disulfide-linked. G76 and D78 together coordinate Ca(2+). 122-123 lines the substrate pocket; the sequence is YW. A Ca(2+)-binding site is contributed by N161. The tract at residues 161-224 is b; sequence NHSSPALETN…NLYDLADYDL (64 aa). H162 contributes to the substrate binding site. I212 provides a ligand contact to Ca(2+). 215-218 is a binding site for substrate; the sequence is NLYD. D221 provides a ligand contact to Ca(2+). The interval 225–428 is A2; sequence NNTVMDQYLK…LRQTNSALGY (204 aa). Position 249 (R249) interacts with substrate. The Nucleophile role is filled by D251. A substrate-binding site is contributed by 254–255; the sequence is KH. H255 contacts Ca(2+). Residue E279 is the Proton donor of the active site. H349, D393, and R397 together coordinate substrate. The interval 429–516 is c; it reads GTTTERWLNE…SVAVWQVSNP (88 aa). Positions 517–600 are d; that stretch reads STSPLIGQVG…SPTYKEFEVL (84 aa). Residues 520-598 form the IPT/TIG domain; sequence PLIGQVGPMM…IKSPTYKEFE (79 aa). Residues 599–703 enclose the CBM20 domain; sequence VLSGNQVSVR…TGTDTVMINW (105 aa). Positions 601 to 703 are e; it reads SGNQVSVRFG…TGTDTVMINW (103 aa).

The protein belongs to the glycosyl hydrolase 13 family. In terms of assembly, monomer. The cofactor is Ca(2+).

The protein resides in the secreted. It carries out the reaction Cyclizes part of a (1-&gt;4)-alpha-D-glucan chain by formation of a (1-&gt;4)-alpha-D-glucosidic bond.. The sequence is that of Cyclomaltodextrin glucanotransferase (cgt) from Bacillus sp. (strain 1-1).